The following is a 377-amino-acid chain: tRNA-specific 2-thiouridylase MnmA (377 aa).

Residues 17–24 (GMSGGVDS) and M43 each bind ATP. The tract at residues 103–105 (NPD) is interaction with target base in tRNA. Residue C108 is the Nucleophile of the active site. Cysteines 108 and 204 form a disulfide. ATP is bound at residue G132. Residues 154-156 (KDQ) form an interaction with tRNA region. The active-site Cysteine persulfide intermediate is C204. The interaction with tRNA stretch occupies residues 316-317 (RY).

This sequence belongs to the MnmA/TRMU family.

The protein localises to the cytoplasm. The enzyme catalyses S-sulfanyl-L-cysteinyl-[protein] + uridine(34) in tRNA + AH2 + ATP = 2-thiouridine(34) in tRNA + L-cysteinyl-[protein] + A + AMP + diphosphate + H(+). Functionally, catalyzes the 2-thiolation of uridine at the wobble position (U34) of tRNA, leading to the formation of s(2)U34. This chain is tRNA-specific 2-thiouridylase MnmA, found in Pseudomonas fluorescens (strain ATCC BAA-477 / NRRL B-23932 / Pf-5).